The chain runs to 101 residues: Urease subunit beta (101 aa).

The protein belongs to the urease beta subunit family. Heterotrimer of UreA (gamma), UreB (beta) and UreC (alpha) subunits. Three heterotrimers associate to form the active enzyme.

Its subcellular location is the cytoplasm. It carries out the reaction urea + 2 H2O + H(+) = hydrogencarbonate + 2 NH4(+). Its pathway is nitrogen metabolism; urea degradation; CO(2) and NH(3) from urea (urease route): step 1/1. The chain is Urease subunit beta from Burkholderia vietnamiensis (strain G4 / LMG 22486) (Burkholderia cepacia (strain R1808)).